The sequence spans 129 residues: Class I hydrophobin 11 (129 aa).

Residues 1–19 form the signal peptide; sequence MRLTPLLAALALPLLTVLA. 4 disulfide bridges follow: C48–C106, C55–C100, C56–C89, and C107–C122.

Belongs to the fungal hydrophobin family. In terms of assembly, self-assembles to form functional amyloid fibrils called rodlets. Self-assembly into fibrillar rodlets occurs spontaneously at hydrophobic:hydrophilic interfaces and the rodlets further associate laterally to form amphipathic monolayers.

The protein localises to the secreted. The protein resides in the cell wall. Aerial growth, conidiation, and dispersal of filamentous fungi in the environment rely upon a capability of their secreting small amphipathic proteins called hydrophobins (HPBs) with low sequence identity. Class I can self-assemble into an outermost layer of rodlet bundles on aerial cell surfaces, conferring cellular hydrophobicity that supports fungal growth, development and dispersal; whereas Class II form highly ordered films at water-air interfaces through intermolecular interactions but contribute nothing to the rodlet structure. This Pleurotus ostreatus (strain PC15) (Oyster mushroom) protein is Class I hydrophobin 11.